The following is a 100-amino-acid chain: Colipase-like protein 2 (100 aa).

Residues Met-1–Ser-21 form the signal peptide. 5 disulfide bridges follow: Cys-34/Cys-45, Cys-40/Cys-56, Cys-44/Cys-78, Cys-66/Cys-86, and Cys-80/Cys-97.

It belongs to the colipase family.

The protein resides in the secreted. This is Colipase-like protein 2 (CLPSL2) from Homo sapiens (Human).